A 613-amino-acid polypeptide reads, in one-letter code: Isocitrate dehydrogenase kinase/phosphatase (613 aa).

Residues 328–334 (APGIRGL) and Lys349 contribute to the ATP site. Residue Asp384 is part of the active site.

Belongs to the AceK family.

Its subcellular location is the cytoplasm. The enzyme catalyses L-seryl-[isocitrate dehydrogenase] + ATP = O-phospho-L-seryl-[isocitrate dehydrogenase] + ADP + H(+). In terms of biological role, bifunctional enzyme which can phosphorylate or dephosphorylate isocitrate dehydrogenase (IDH) on a specific serine residue. This is a regulatory mechanism which enables bacteria to bypass the Krebs cycle via the glyoxylate shunt in response to the source of carbon. When bacteria are grown on glucose, IDH is fully active and unphosphorylated, but when grown on acetate or ethanol, the activity of IDH declines drastically concomitant with its phosphorylation. The polypeptide is Isocitrate dehydrogenase kinase/phosphatase (Cupriavidus necator (strain ATCC 17699 / DSM 428 / KCTC 22496 / NCIMB 10442 / H16 / Stanier 337) (Ralstonia eutropha)).